We begin with the raw amino-acid sequence, 273 residues long: Putative deoxyribonuclease TATDN1 homolog (273 aa).

4 residues coordinate a divalent metal cation: E91, H125, H147, and D195.

Belongs to the metallo-dependent hydrolases superfamily. TatD-type hydrolase family. A divalent metal cation is required as a cofactor.

It localises to the nucleus. In terms of biological role, putative deoxyribonuclease. This chain is Putative deoxyribonuclease TATDN1 homolog, found in Encephalitozoon cuniculi (strain GB-M1) (Microsporidian parasite).